The following is a 588-amino-acid chain: D-3-phosphoglycerate dehydrogenase 3, chloroplastic (588 aa).

The N-terminal 38 residues, 1–38, are a transit peptide targeting the chloroplast; the sequence is MATSLNLSSIFSSSSRLVTTPSSVFPIRQRRRIILVTS. Residues 195–196, Asp-215, 274–276, and Asp-300 each bind NAD(+); these read KV and VAR. The active site involves Arg-276. Residue Glu-305 is part of the active site. His-324 acts as the Proton donor in catalysis. 324-327 lines the NAD(+) pocket; that stretch reads HLGA. In terms of domain architecture, ACT spans 516–588; sequence VILCRQVDQP…AIEEFVFLKL (73 aa).

It belongs to the D-isomer specific 2-hydroxyacid dehydrogenase family. As to expression, expressed in aerial parts. Not detected in roots and meristematic tissue. Expressed in cotyledons, adult leaves, stigma and anther filaments. Detected in the embryo.

It localises to the plastid. It is found in the chloroplast. The catalysed reaction is (2R)-3-phosphoglycerate + NAD(+) = 3-phosphooxypyruvate + NADH + H(+). It functions in the pathway amino-acid biosynthesis; L-serine biosynthesis; L-serine from 3-phospho-D-glycerate: step 1/3. Partially inhibited by 1 mM serine. In terms of biological role, involved in the plastidial phosphorylated pathway of serine biosynthesis (PPSB). The protein is D-3-phosphoglycerate dehydrogenase 3, chloroplastic (PGDH3) of Arabidopsis thaliana (Mouse-ear cress).